The chain runs to 436 residues: GTPase Der (436 aa).

EngA-type G domains are found at residues 4-167 and 175-351; these read PVIA…PTDL and IKFS…ENQN. GTP-binding positions include 10 to 17, 57 to 61, 119 to 122, 181 to 188, 229 to 233, and 294 to 297; these read GRPNVGKS, DTGGI, NKAD, DTAGI, and NKWD. Positions 352–436 constitute a KH-like domain; the sequence is RRIQSALLND…PIHLIPRQRK (85 aa).

It belongs to the TRAFAC class TrmE-Era-EngA-EngB-Septin-like GTPase superfamily. EngA (Der) GTPase family. As to quaternary structure, associates with the 50S ribosomal subunit.

Functionally, GTPase that plays an essential role in the late steps of ribosome biogenesis. The sequence is that of GTPase Der from Latilactobacillus sakei subsp. sakei (strain 23K) (Lactobacillus sakei subsp. sakei).